Here is a 1186-residue protein sequence, read N- to C-terminus: Pumilio homolog 1 (1186 aa).

An N-acetylserine modification is found at S2. S19 carries the post-translational modification Phosphoserine. A disordered region spans residues 22–73; sequence LKHHPQEPANPNMPVVLTSGTGSQAQPQPAANQALAAGTHSSPVPGSIGVAG. The span at 45 to 58 shows a compositional bias: low complexity; the sequence is QAQPQPAANQALAA. Phosphoserine occurs at positions 75, 98, and 106. T112 is subject to Phosphothreonine. A phosphoserine mark is found at S124, S159, S197, S209, and S229. Positions 233–272 are disordered; the sequence is SCLRKGGFGPRDADSDENDKGEKKNKGTFDGDKLGDLKEE. The span at 250–272 shows a compositional bias: basic and acidic residues; it reads NDKGEKKNKGTFDGDKLGDLKEE. S305 is subject to Phosphoserine. Positions 485–502 are enriched in low complexity; the sequence is TNSANQQTTPQAQQGQQQ. 2 disordered regions span residues 485–524 and 613–648; these read TNSANQQTTPQAQQGQQQVLRGGASQRPLTPNQNQQGQQT and AGTTNGPFRPLGTQQPQPQPQQQPNNNLASSSFYGN. Polar residues predominate over residues 511-524; the sequence is RPLTPNQNQQGQQT. Phosphothreonine is present on T514. Residues 626-639 are compositionally biased toward low complexity; that stretch reads QQPQPQPQQQPNNN. A phosphoserine mark is found at S709 and S714. A disordered region spans residues 742–773; sequence GPVGMPLPSQGPGHSQTPPPSLSSHGSSSSLN. The segment covering 763 to 773 has biased composition (low complexity); sequence LSSHGSSSSLN. Omega-N-methylarginine is present on R796. A phosphoserine mark is found at S806 and S822. The region spanning 828-1168 is the PUM-HD domain; that stretch reads GRSRLLEDFR…HILAKLEKYY (341 aa). Pumilio repeat units follow at residues 848 to 883, 884 to 919, 920 to 955, 956 to 991, 992 to 1027, 1028 to 1063, 1064 to 1099, and 1103 to 1142; these read EIAGHIMEFSQDQHGSRFIQLKLERATPAERQLVFN, EILQAAYQLMVDVFGNYVIQKFFEFGSLEQKLALAE, RIRGHVLSLALQMYGCRVIQKALEFIPSDQQNEMVR, ELDGHVLKCVKDQNGNHVVQKCIECVQPQSLQFIID, AFKGQVFALSTHPYGCRVIQRILEHCLPDQTLPILE, ELHQHTEQLVQDQYGNYVIQHVLEHGRPEDKSKIVA, EIRGNVLVLSQHKFASNVVEKCVTHASRTERAVLID, and TMNDGPHSALYTMMKDQYANYVVQKMIDVAEPGQRKIVMH. Residues 863 to 867 form an adenine-nucleotide binding in RNA target region; that stretch reads SRFIQ. The segment at 899–903 is uracil-nucleotide binding in RNA target; sequence NYVIQ. Residues 935–939 are adenine-nucleotide binding in RNA target; that stretch reads CRVIQ. The segment at 971-975 is non-specific-nucleotide binding in RNA target; that stretch reads NHVVQ. An adenine-nucleotide binding in RNA target region spans residues 1007-1011; sequence CRVIQ. The tract at residues 1043–1047 is uracil-nucleotide binding in RNA target; sequence NYVIQ. The segment at 1079 to 1083 is guanine-nucleotide binding in RNA target; sequence SNVVE. The segment at 1122–1126 is uracil-nucleotide binding in RNA target; the sequence is NYVVQ.

As to quaternary structure, recruits the CCR4-POP2-NOT deadenylase leading to translational inhibition and mRNA degradation. In case of viral infection, interacts with DHX58. Interacts with TRIM71 (via NHL repeats) in an RNA-dependent manner. Phosphorylation at Ser-714 promotes RNA-binding activity. Following growth factor stimulation phosphorylated at Ser-714, promoting binding to the 3'-UTR of CDKN1B/p27 mRNA. Expressed in brain, heart, kidney, muscle, intestine and stomach. Not expressed in cerebellum, corpus callosum, caudate nucleus, hippocampus, medulla oblongata and putamen. Expressed in all fetal tissues tested.

It is found in the cytoplasm. The protein localises to the P-body. Its subcellular location is the cytoplasmic granule. In terms of biological role, sequence-specific RNA-binding protein that acts as a post-transcriptional repressor by binding the 3'-UTR of mRNA targets. Binds to an RNA consensus sequence, the Pumilio Response Element (PRE), 5'-UGUANAUA-3', that is related to the Nanos Response Element (NRE). Mediates post-transcriptional repression of transcripts via different mechanisms: acts via direct recruitment of the CCR4-POP2-NOT deadenylase leading to translational inhibition and mRNA degradation. Also mediates deadenylation-independent repression by promoting accessibility of miRNAs. Following growth factor stimulation, phosphorylated and binds to the 3'-UTR of CDKN1B/p27 mRNA, inducing a local conformational change that exposes miRNA-binding sites, promoting association of miR-221 and miR-222, efficient suppression of CDKN1B/p27 expression, and rapid entry to the cell cycle. Acts as a post-transcriptional repressor of E2F3 mRNAs by binding to its 3'-UTR and facilitating miRNA regulation. Represses a program of genes necessary to maintain genomic stability such as key mitotic, DNA repair and DNA replication factors. Its ability to repress those target mRNAs is regulated by the lncRNA NORAD (non-coding RNA activated by DNA damage) which, due to its high abundance and multitude of PUMILIO binding sites, is able to sequester a significant fraction of PUM1 and PUM2 in the cytoplasm. Involved in neuronal functions by regulating ATXN1 mRNA levels: acts by binding to the 3'-UTR of ATXN1 transcripts, leading to their down-regulation independently of the miRNA machinery. Plays a role in cytoplasmic sensing of viral infection. In testis, acts as a post-transcriptional regulator of spermatogenesis by binding to the 3'-UTR of mRNAs coding for regulators of p53/TP53. Involved in embryonic stem cell renewal by facilitating the exit from the ground state: acts by targeting mRNAs coding for naive pluripotency transcription factors and accelerates their down-regulation at the onset of differentiation. Binds specifically to miRNA MIR199A precursor, with PUM2, regulates miRNA MIR199A expression at a postranscriptional level. The polypeptide is Pumilio homolog 1 (Homo sapiens (Human)).